The sequence spans 132 residues: Fatty acid-binding protein, adipocyte (132 aa).

The residue at position 2 (Cys2) is an N-acetylcysteine. Ser13 carries the phosphoserine modification. Phosphotyrosine; by Tyr-kinases is present on Tyr20. Positions 22–32 match the Nuclear localization signal motif; the sequence is KEVGVGFATRK. An a fatty acid-binding site is contributed by 127–129; the sequence is RVY.

The protein belongs to the calycin superfamily. Fatty-acid binding protein (FABP) family. In terms of assembly, monomer. Homodimer. Interacts with PPARG.

Its subcellular location is the cytoplasm. It localises to the nucleus. Its function is as follows. Lipid transport protein in adipocytes. Binds both long chain fatty acids and retinoic acid. Delivers long-chain fatty acids and retinoic acid to their cognate receptors in the nucleus. The protein is Fatty acid-binding protein, adipocyte (Fabp4) of Rattus norvegicus (Rat).